The primary structure comprises 209 residues: Probable glutathione peroxidase 8 (209 aa).

The residue at position 1 (Met-1) is an N-acetylmethionine. The helical transmembrane segment at 18–40 (IFAVLLSMVLCTVMLFLLQLKFL) threads the bilayer. Residue Cys-79 is part of the active site.

This sequence belongs to the glutathione peroxidase family.

Its subcellular location is the membrane. The catalysed reaction is 2 glutathione + H2O2 = glutathione disulfide + 2 H2O. The chain is Probable glutathione peroxidase 8 (Gpx8) from Mus musculus (Mouse).